A 159-amino-acid polypeptide reads, in one-letter code: Eukaryotic translation initiation factor 5A-2 (159 aa).

The segment covering 1–12 (MSDEEHQFESKA) has biased composition (basic and acidic residues). The tract at residues 1-23 (MSDEEHQFESKADAGASKTYPQQ) is disordered. The residue at position 52 (Lys52) is a Hypusine.

The protein belongs to the eIF-5A family. Post-translationally, lys-52 undergoes hypusination, a unique post-translational modification that consists in the addition of a butylamino group from spermidine to lysine side chain, leading to the formation of the unusual amino acid hypusine. eIF-5As are the only known proteins to undergo this modification, which is essential for their function.

Its function is as follows. Translation factor that promotes translation elongation and termination, particularly upon ribosome stalling at specific amino acid sequence contexts. Binds between the exit (E) and peptidyl (P) site of the ribosome and promotes rescue of stalled ribosome: specifically required for efficient translation of polyproline-containing peptides as well as other motifs that stall the ribosome. Acts as a ribosome quality control (RQC) cofactor by joining the RQC complex to facilitate peptidyl transfer during CAT tailing step. The polypeptide is Eukaryotic translation initiation factor 5A-2 (EIF-5A2) (Nicotiana plumbaginifolia (Leadwort-leaved tobacco)).